The chain runs to 458 residues: GTPase Der (458 aa).

EngA-type G domains follow at residues 4–169 (PSIA…PKDF) and 178–353 (VMMS…TQHR). Residues 10 to 17 (GRPNVGKS), 57 to 61 (DTGGL), 120 to 123 (NKCE), 184 to 191 (GRPNVGKS), 231 to 235 (DTAGI), and 296 to 299 (NKWD) each bind GTP. One can recognise a KH-like domain in the interval 354 to 439 (MRVTTSVVNE…PIILLWRGKQ (86 aa)).

Belongs to the TRAFAC class TrmE-Era-EngA-EngB-Septin-like GTPase superfamily. EngA (Der) GTPase family. Associates with the 50S ribosomal subunit.

In terms of biological role, GTPase that plays an essential role in the late steps of ribosome biogenesis. The polypeptide is GTPase Der (Prochlorococcus marinus (strain MIT 9515)).